Here is a 154-residue protein sequence, read N- to C-terminus: UPF0178 protein RC1_2062 (154 aa).

This sequence belongs to the UPF0178 family.

This chain is UPF0178 protein RC1_2062, found in Rhodospirillum centenum (strain ATCC 51521 / SW).